We begin with the raw amino-acid sequence, 226 residues long: Leucyl/phenylalanyl-tRNA--protein transferase (226 aa).

It belongs to the L/F-transferase family.

The protein localises to the cytoplasm. It carries out the reaction N-terminal L-lysyl-[protein] + L-leucyl-tRNA(Leu) = N-terminal L-leucyl-L-lysyl-[protein] + tRNA(Leu) + H(+). The catalysed reaction is N-terminal L-arginyl-[protein] + L-leucyl-tRNA(Leu) = N-terminal L-leucyl-L-arginyl-[protein] + tRNA(Leu) + H(+). The enzyme catalyses L-phenylalanyl-tRNA(Phe) + an N-terminal L-alpha-aminoacyl-[protein] = an N-terminal L-phenylalanyl-L-alpha-aminoacyl-[protein] + tRNA(Phe). Functionally, functions in the N-end rule pathway of protein degradation where it conjugates Leu, Phe and, less efficiently, Met from aminoacyl-tRNAs to the N-termini of proteins containing an N-terminal arginine or lysine. The polypeptide is Leucyl/phenylalanyl-tRNA--protein transferase (Stutzerimonas stutzeri (strain A1501) (Pseudomonas stutzeri)).